Here is a 618-residue protein sequence, read N- to C-terminus: Glutamine--fructose-6-phosphate aminotransferase [isomerizing] (618 aa).

The Nucleophile; for GATase activity role is filled by cysteine 2. Positions 2–226 (CGIVGYAGRN…DFETAVLSPT (225 aa)) constitute a Glutamine amidotransferase type-2 domain. Positions 69–94 (HTRWATHGRPSTKNAHPHNSGGNPGK) are disordered. SIS domains follow at residues 295 to 434 (SEDE…VRDR) and 467 to 608 (CAEG…IDKP). The active-site For Fru-6P isomerization activity is lysine 613.

As to quaternary structure, homodimer.

It is found in the cytoplasm. It carries out the reaction D-fructose 6-phosphate + L-glutamine = D-glucosamine 6-phosphate + L-glutamate. Its function is as follows. Catalyzes the first step in hexosamine metabolism, converting fructose-6P into glucosamine-6P using glutamine as a nitrogen source. The sequence is that of Glutamine--fructose-6-phosphate aminotransferase [isomerizing] from Methanosarcina acetivorans (strain ATCC 35395 / DSM 2834 / JCM 12185 / C2A).